The following is a 610-amino-acid chain: Glutamine--fructose-6-phosphate aminotransferase [isomerizing] (610 aa).

Cysteine 2 acts as the Nucleophile; for GATase activity in catalysis. The Glutamine amidotransferase type-2 domain maps to 2–218 (CGIVGAVAQR…EGDVAEMTRR (217 aa)). 2 SIS domains span residues 286–426 (AAEI…QQQR) and 459–600 (LAED…VDQP). Lysine 605 acts as the For Fru-6P isomerization activity in catalysis.

Homodimer.

The protein localises to the cytoplasm. The catalysed reaction is D-fructose 6-phosphate + L-glutamine = D-glucosamine 6-phosphate + L-glutamate. In terms of biological role, catalyzes the first step in hexosamine metabolism, converting fructose-6P into glucosamine-6P using glutamine as a nitrogen source. The polypeptide is Glutamine--fructose-6-phosphate aminotransferase [isomerizing] (Vibrio cholerae serotype O1 (strain ATCC 39315 / El Tor Inaba N16961)).